The primary structure comprises 2227 residues: MNMSKQGIFQTVGSGLDHILSLADIEEEQMIQSVDRTAVTGASYFTSVDQSSVHTAEVGSHQIEPLKTSVDKPGSKKTQGEKFFLIHSADWLTTHALFHEVAKLDVVKLLYNEQFAVQGLLRYHTYARFGIEIQVQINPTPFQQGGLICAMVPGDQSYGSIASLTVYPHGLLNCNINNVVRIKVPFIYTRGAYHFKDPQYPVWELTIRVWSELNIGTGTSAYTSLNVLARFTDLELHGLTPLSTQMMRNEFRVSTTENVVNLSNYEDARAKMSFALDQEDWKSDPSQGGGIKITHFTTWTSIPTLAAQFPFNASDSVGQQIKVIPVDPYFFQMTNTNPDQKCITALASICQMFCFWRGDLVFDFQVFPTKYHSGRLLFCFVPGNELIDVTGITLKQATTAPCAVMDITGVQSTLRFRVPWISDTPYRVNRYTKSAHQKGEYTAIGKLIVYCYNRLTSPSNVASHVRVNVYLSAINLECFAPLYHAMDVTTQVGDDSGGFSTTVSTEQNVPDPQVGITTMRDLKGKANRGKMDVSGVQAPRGSYQQQLNDPVLAKKVPETFPELKPGESRHTSDHMSIYKFMGRSHFLCTFTFNSNNKEYTFPITLSSTSNPPHGLPSTLRWFFNLFQLYRGPLDLTIIITGATDVDGMAWFTPVGLAVDPWVEKESALSIDYKTALGAVRFNTRRTGNIQIRLPWYSYLYAVSGALDGLGDKTDSTFGLFLFEIANYNHSDEYLSFSCYLSVTEQSEFYFPRAPLNSNAMLSTESMMSRIAAGDLESSVDDPRSEEDRRFESHIECRKPYKELRLEVGKQRLKYAQEELSNEVLPPPRKMKGLFSQAKISLFYTEEHEIMKFSWRGVTADTRALRRFGFSLAAGRSVWTLEMDAGVLTGRLIRLNDEKWTEMKDDKIVSLIEKFTSNKYWSKVNFPHGMLDLEEIAANSKDFPNMSETDLCFLLHWLNPKKINLADRMLGLSGVQEIKEQGVGLIAECRTFLDSIAGTLKSMMFGFHHSVTVEIINTVLCFVKSGILLYVIQQLNQDEHSHIIGLLRVMNYADIGCSVISCGKVFSKMLETVFNWQMDSRMMELRTQSFSNWLRDICSGITIFKSFKDAIYWLYTKLKDFYEVNYGKKKDILNILKDNQQKIEKAIEEADNFCILQIQDVEKFDQYQKGVDLIQKLRTVHSMAQVDPNLGVHLSPLRDCIARVHQKLKNLGSINQAMVTRCEPVVCYLYGKRGGGKSLTSIALATKICKHYGVEPEKNIYTKPVASDYWDGYSGQLVCIIDDIGQNTTDEDWSDFCQLVSGCPMRLNMASLEEKGRHFSSPFIIATSNWSNPSPKTVYVKEAIDRRLHFKVEVKPASFFKNPHNDMLNVNLAKTNDAIKDMSCVDLIMDGHNISLMDLLSSLVMTVEIRKQNMSEFMELWSQGISDDDNDSAVAEFFQSFPSGEPSNWKLSSFFQSVTNHKWVAVGAAVGILGVLVGGWFVYKHFSRKEEEPIPAEGVYHGVTKPKQVIKLDADPVESQSTLEIAGLVRKNLVQFGVGEKNGCVRWVMNALGVKDDWLLVPSHAYKFEKDYEMMEFYFNRGGTYYSISAGNVVIQSLDVGFQDVVLMKVPTIPKFRDITQHFIKKGDVPRALNRLATLVTTVNGTPMLISEGPLKMEEKATYVHKKNDGTTVDLTVDQAWRGKGEGLPGMCGGALVSSNQSIQNAILGIHVAGGNSILVAKLVTQEMFQNIDKKIESQRIMKVEFTQCSMNVVSKTLFRKSPIHHHIDKTMINFPAAMPFSKAEIDPMAMMLSKYSLPIVEEPEDYKEASVFYQNKIVGKTQLVDDFLDLDMAITGAPGIDAINMDSSPGFPYVQEKLTKRDLIWLDENGLLLGVHPRLAQRILFNTVMMENCSDLDVVFTTCPKDELRPLEKVLESKTRAIDACPLDYTILCRMYWGPAISYFHLNPGFHTGVAIGIDPDRQWDELFKTMIRFGDVGLDLDFSAFDASLSPFMIREAGRIMSELSGTPSHFGTALINTIIYSKHLLYNCCYHVCGSMPSGSPCTALLNSIINNINLYYVFSKIFGKSPVFFCQALRILCYGDDVLIVFSRDVQIDNLDLIGQKIVDEFKKLGMTATSADKNVPQLKPVSELTFLKRSFNLVEDRIRPAISEKTIWSLMAWQRSNAEFEQNLENAQWFAFMHGYEFYQKFYYFVQSCLEKEMIEYRLKSYDWWRMRFYDQCFICDLS.

2 short sequence motifs ((L)YPX(n)L motif) span residues 167 to 171 (YPHGL) and 200 to 205 (YPVWEL). Residues 766 to 836 (MMSRIAAGDL…PRKMKGLFSQ (71 aa)) are involved in P1-2A pentamerization. A helical membrane pass occupies residues 1011–1031 (TVEIINTVLCFVKSGILLYVI). Positions 1043 to 1070 (IGLLRVMNYADIGCSVISCGKVFSKMLE) are membrane-penetrating ability. Residues 1127 to 1152 (KKKDILNILKDNQQKIEKAIEEADNF) are a coiled coil. The SF3 helicase domain occupies 1204–1366 (HQKLKNLGSI…SFFKNPHNDM (163 aa)). 1230-1237 (GKRGGGKS) is an ATP binding site. A helical membrane pass occupies residues 1462-1482 (WVAVGAAVGILGVLVGGWFVY). Tyr-1499 bears the O-(5'-phospho-RNA)-tyrosine mark. Positions 1514 to 1728 (DPVESQSTLE…VAKLVTQEMF (215 aa)) constitute a Peptidase C3 domain. Residues His-1563, Asp-1603, and Cys-1691 each act as for protease 3C activity in the active site. Positions 1976-2097 (DVGLDLDFSA…VFSRDVQIDN (122 aa)) constitute a RdRp catalytic domain.

Belongs to the picornaviridae polyprotein family. Homodimer. Homomultimer; probably interacts with membranes in a multimeric form. Seems to assemble into amyloid-like fibers. In terms of assembly, homodimer. Monomer. Interacts with protein 3CD. As to quaternary structure, interacts with host ACBD3. Interacts with protein 3AB. In terms of assembly, interacts with human MAVS. As to quaternary structure, homodimer; disulfide-linked. Homopentamer. Homooligomer. In terms of assembly, interacts with capsid protein VP2. Interacts with capsid protein VP3. As to quaternary structure, interacts with capsid protein VP1. Interacts with capsid protein VP3. Interacts with capsid protein VP1. Interacts with capsid protein VP2. Specific enzymatic cleavages by viral protease in vivo yield a variety of precursors and mature proteins. Polyprotein processing intermediates are produced, such as P1-2A which is a functional precursor of the structural proteins, VP0 which is a VP4-VP2 precursor, VP1-2A precursor, 3ABC precursor which is a stable and catalytically active precursor of 3A, 3B and 3C proteins, 3AB and 3CD precursors. The assembly signal 2A is removed from VP1-2A by a host protease, possibly host Cathepsin L. This cleavage occurs over a region of 3 amino-acids probably generating VP1 proteins with heterogeneous C-termini. Post-translationally, during virion maturation, immature virions are rendered infectious following cleavage of VP0 into VP4 and VP2. This maturation seems to be an autocatalytic event triggered by the presence of RNA in the capsid and is followed by a conformational change of the particle. In terms of processing, the assembly signal 2A is removed from VP1-2A by a host protease, possibly host Cathepsin L in naked virions. This cleavage does not occur in enveloped virions. This cleavage occurs over a region of 3 amino-acids probably generating VP1 proteins with heterogeneous C-termini. VPg is uridylylated prior to priming replication into VPg-pUpU. Post-translationally, unlike other picornaviruses, does not seem to be myristoylated.

The protein localises to the virion. It is found in the host endosome. Its subcellular location is the host multivesicular body. It localises to the host membrane. The protein resides in the host mitochondrion outer membrane. The protein localises to the host cytoplasm. It is found in the host cytoplasmic vesicle membrane. The catalysed reaction is RNA(n) + a ribonucleoside 5'-triphosphate = RNA(n+1) + diphosphate. It carries out the reaction a ribonucleoside 5'-triphosphate + H2O = a ribonucleoside 5'-diphosphate + phosphate + H(+). The enzyme catalyses Selective cleavage of Gln-|-Gly bond in the poliovirus polyprotein. In other picornavirus reactions Glu may be substituted for Gln, and Ser or Thr for Gly.. Capsid proteins VP1, VP2, and VP3 form a closed capsid enclosing the viral positive strand RNA genome. All these proteins contain a beta-sheet structure called beta-barrel jelly roll. Together they form an icosahedral capsid (T=3) composed of 60 copies of each VP1, VP2, and VP3, with a diameter of approximately 300 Angstroms. VP1 is situated at the 12 fivefold axes, whereas VP2 and VP3 are located at the quasi-sixfold axes. The naked capsid interacts with the host receptor HAVCR1 to provide virion attachment to and probably entry into the target cell. Functionally, VP0 precursor is a component of the immature procapsids. In terms of biological role, plays a role in the assembly of the 12 pentamers into an icosahedral structure. Has not been detected in mature virions, supposedly owing to its small size. Its function is as follows. Precursor component of immature procapsids that corresponds to an extended form of the structural protein VP1. After maturation, possibly by the host Cathepsin L, the assembly signal 2A is cleaved to give rise to the mature VP1 protein. Functions as a viroporin. Affects membrane integrity and causes an increase in membrane permeability. Involved in host intracellular membrane rearrangements probably to give rise to the viral factories. Does not disrupt calcium homeostasis or glycoprotein trafficking. Antagonizes the innate immune response of the host by suppressing IFN-beta synthesis, which it achieves by interfering with the RIG-I/IFIH1 pathway. Functionally, affects membrane integrity and causes an increase in membrane permeability. In terms of biological role, associates with and induces structural rearrangements of intracellular membranes. Displays RNA-binding activity. Its function is as follows. The precursor 3ABC is targeted to the mitochondrial membrane where protease 3C activity cleaves and inhibits the host antiviral protein MAVS, thereby disrupting activation of IRF3 through the IFIH1/MDA5 pathway. In vivo, the protease activity of 3ABC precursor is more efficient in cleaving the 2BC precursor than that of protein 3C. The 3ABC precursor may therefore play a role in the proteolytic processing of the polyprotein. Possible viroporin. Interacts with the 3CD precursor and with RNA structures found at both the 5'- and 3'-termini of the viral genome. Since the 3AB precursor contains the hydrophobic domain 3A, it probably anchors the whole viral replicase complex to intracellular membranes on which viral RNA synthesis occurs. Functionally, may serve as membrane anchor to the 3AB and 3ABC precursors via its hydrophobic domain. May interact with RNA. In terms of biological role, acts as a primer for viral RNA replication and remains covalently bound to viral genomic RNA. VPg is uridylylated prior to priming replication into VPg-pUpU. The VPg-pUpU is then used as primer on the genomic RNA poly(A) by the RNA-dependent RNA polymerase to replicate the viral genome. Its function is as follows. Cysteine protease that generates mature viral proteins from the precursor polyprotein. In addition to its proteolytic activity, it binds to viral RNA, and thus influences viral genome replication. RNA and substrate bind cooperatively to the protease. Cleaves IKBKG/NEMO to impair innate immune signaling. Cleaves host PABPC1 which may participate in the switch of viral translation to RNA synthesis. Interacts with the 3AB precursor and with RNA structures found at both the 5'- and 3'-termini of the viral genome. Disrupts TLR3 signaling by degrading the host adapter protein TICAM1/TRIF. Functionally, RNA-directed RNA polymerase 3D-POL replicates genomic and antigenomic RNA by recognizing replications specific signals. This chain is Genome polyprotein, found in Cercopithecus hamlyni (Owl-faced monkey).